Consider the following 244-residue polypeptide: Uracil phosphoribosyltransferase (244 aa).

GTP contacts are provided by residues Lys-59, Arg-68, and 102–105 (YSKI). Residue Arg-112 participates in 5-phospho-alpha-D-ribose 1-diphosphate binding. Arg-129 lines the GTP pocket. Position 137 (Arg-137) interacts with 5-phospho-alpha-D-ribose 1-diphosphate. GTP is bound at residue Arg-158. Residues Asp-164 and 164–172 (DPMCATAGS) each bind 5-phospho-alpha-D-ribose 1-diphosphate. Uracil contacts are provided by residues Ile-229 and 234–236 (GDF). Asp-235 provides a ligand contact to 5-phospho-alpha-D-ribose 1-diphosphate.

It belongs to the UPRTase family. Monomer. Forms homodimers in presence of substrates and homotetramers in the presence of GTP. It depends on Mg(2+) as a cofactor.

The enzyme catalyses UMP + diphosphate = 5-phospho-alpha-D-ribose 1-diphosphate + uracil. It functions in the pathway pyrimidine metabolism; UMP biosynthesis via salvage pathway; UMP from uracil: step 1/1. With respect to regulation, allosterically activated by GTP. Binding of GTP leads to 5-time activation of the enzyme. Its function is as follows. Catalyzes the conversion of uracil and 5-phospho-alpha-D-ribose 1-diphosphate (PRPP) to UMP and diphosphate. The protein is Uracil phosphoribosyltransferase (uprt) of Toxoplasma gondii.